The sequence spans 40 residues: Metallothionein-1 (40 aa).

The protein belongs to the metallothionein superfamily. Type 5 family.

Its function is as follows. This protein binds cations of several transition elements. It is thought to be involved in detoxification processes. This chain is Metallothionein-1 (MtnA), found in Drosophila ananassae (Fruit fly).